Here is a 328-residue protein sequence, read N- to C-terminus: Putative HTH-type transcriptional regulatory protein MA_3524 (328 aa).

Residues 132-190 form the HTH cro/C1-type domain; it reads LKKARTDQSMSLGTLASMVGVSRRTISKYEEEGMDASIDVVLQLEDIFGVELARPIDIL. Positions 143-162 form a DNA-binding region, H-T-H motif; it reads LGTLASMVGVSRRTISKYEE.

The protein is Putative HTH-type transcriptional regulatory protein MA_3524 of Methanosarcina acetivorans (strain ATCC 35395 / DSM 2834 / JCM 12185 / C2A).